The following is a 376-amino-acid chain: Glucose-1-phosphate adenylyltransferase (376 aa).

Alpha-D-glucose 1-phosphate is bound by residues tyrosine 101, glycine 166, 181–182 (EK), and serine 192.

This sequence belongs to the bacterial/plant glucose-1-phosphate adenylyltransferase family. As to quaternary structure, homotetramer.

It catalyses the reaction alpha-D-glucose 1-phosphate + ATP + H(+) = ADP-alpha-D-glucose + diphosphate. The protein operates within glycan biosynthesis; glycogen biosynthesis. Its function is as follows. Involved in the biosynthesis of ADP-glucose, a building block required for the elongation reactions to produce glycogen. Catalyzes the reaction between ATP and alpha-D-glucose 1-phosphate (G1P) to produce pyrophosphate and ADP-Glc. The polypeptide is Glucose-1-phosphate adenylyltransferase (Bacillus cytotoxicus (strain DSM 22905 / CIP 110041 / 391-98 / NVH 391-98)).